The sequence spans 161 residues: Regulator of ribonuclease activity A (161 aa).

This sequence belongs to the RraA family. As to quaternary structure, homotrimer. Binds to both RNA-binding sites in the C-terminal region of Rne and to RhlB.

The protein resides in the cytoplasm. Functionally, globally modulates RNA abundance by binding to RNase E (Rne) and regulating its endonucleolytic activity. Can modulate Rne action in a substrate-dependent manner by altering the composition of the degradosome. Modulates RNA-binding and helicase activities of the degradosome. The polypeptide is Regulator of ribonuclease activity A (Salmonella choleraesuis (strain SC-B67)).